Reading from the N-terminus, the 368-residue chain is RAB6-interacting golgin (368 aa).

Disordered regions lie at residues 1–43 (MAQD…REKA), 55–133 (DGSA…DCKV), and 302–368 (KQMA…AVAT). Residues 11-27 (EELRRLKQNKDPFEPQR) are compositionally biased toward basic and acidic residues. Residues 80–89 (SPSPVAPSPL) show a composition bias toward pro residues. Basic and acidic residues predominate over residues 114-133 (NSHHGHKSAEVRAPKPDCKV). Residues 145–310 (RWEVLQQEQR…AKQMASVERL (166 aa)) adopt a coiled-coil conformation. Residues 188–368 (IQKELQALDD…AKNFSAAVAT (181 aa)) are necessary for interaction with RCHY1.

It belongs to the GORAB family. Interacts with RCHY1. Interacts with SCYL1 and RAB6A/RAB6. As to expression, expressed in small intestine, kidney, skeletal muscle, lung, spleen, brain and heart. High expression is observed in osteoblasts and skin; also expressed in osteoclasts albeit at lower levels.

It is found in the cytoplasm. The protein localises to the golgi apparatus. This chain is RAB6-interacting golgin (Gorab), found in Mus musculus (Mouse).